The sequence spans 407 residues: Lysosome-associated membrane glycoprotein 1 (407 aa).

The N-terminal stretch at 1 to 21 is a signal peptide; that stretch reads MAAPGARRPLLLLLLAGLAHS. The tract at residues 22 to 189 is first lumenal domain; that stretch reads APALFEVKDN…SKEETRCPQD (168 aa). Over 22 to 371 the chain is Lumenal; that stretch reads APALFEVKDN…VEECVQDGNN (350 aa). Residues asparagine 32, asparagine 59, asparagine 71, asparagine 79, asparagine 102, asparagine 116, asparagine 125, asparagine 145, asparagine 160, and asparagine 178 are each glycosylated (N-linked (GlcNAc...) asparagine). Residues cysteine 36 and cysteine 75 are joined by a disulfide bond. Cysteine 150 and cysteine 186 form a disulfide bridge. Residues 180–211 form a disordered region; that stretch reads SKEETRCPQDQPSPTTGPPSPSPPLVPTNPSV. The hinge stretch occupies residues 190–219; the sequence is QPSPTTGPPSPSPPLVPTNPSVSKYNVTGD. Pro residues predominate over residues 194–206; that stretch reads TTGPPSPSPPLVP. Asparagine 215, asparagine 220, asparagine 233, asparagine 241, asparagine 271, asparagine 283, asparagine 297, and asparagine 312 each carry an N-linked (GlcNAc...) asparagine glycan. Positions 220 to 371 are second lumenal domain; that stretch reads NGTCLLASMA…VEECVQDGNN (152 aa). Cysteine 223 and cysteine 260 are disulfide-bonded. Cysteine 328 and cysteine 365 form a disulfide bridge. The chain crosses the membrane as a helical span at residues 372-395; sequence MLIPIAVGGALAGLVLIVLIAYLI. The Cytoplasmic segment spans residues 396-407; the sequence is GRKRSHAGYQTI.

Belongs to the LAMP family. Interacts with ABCB9; this interaction strongly stabilizes ABCB9 and protects ABCB9 against lysosomal degradation. Interacts with FURIN. Interacts with TMEM175; inhibiting the proton channel activity of TMEM175. Post-translationally, O- and N-glycosylated; some of the N-glycans attached to LAMP-1 are polylactosaminoglycans.

It localises to the lysosome membrane. Its subcellular location is the endosome membrane. It is found in the late endosome membrane. The protein resides in the cell membrane. The protein localises to the cytolytic granule membrane. In terms of biological role, lysosomal membrane glycoprotein which plays an important role in lysosome biogenesis, lysosomal pH regulation, autophagy and cholesterol homeostasis. Acts as an important regulator of lysosomal lumen pH regulation by acting as a direct inhibitor of the proton channel TMEM175, facilitating lysosomal acidification for optimal hydrolase activity. Also plays an important role in NK-cells cytotoxicity. Mechanistically, participates in cytotoxic granule movement to the cell surface and perforin trafficking to the lytic granule. In addition, protects NK-cells from degranulation-associated damage induced by their own cytotoxic granule content. Presents carbohydrate ligands to selectins. The chain is Lysosome-associated membrane glycoprotein 1 (Lamp1) from Rattus norvegicus (Rat).